Here is a 527-residue protein sequence, read N- to C-terminus: MALLRHLLPVLTVGSAVQSAVLVQDQFQTRCENFAGKIDLPNVKVNFASYIPGSTNLTLDNVPTCDQSQVVSSDICRVAMAVTTSNASEITLEAWFPRDYTGRFLSTGNGGLGGCIQYSDLDYASRLGFATVGANNGHNGTSGEPFYKAPEVLEDFVYRSVHTGIVVGKQLTKLFYDEGFDTSYYLGCSTGGRQGFKLAQDFPGEVDGIIAGAPAINFVGLLSWSAHFYPITGPVGSATYLSLDDWDLVHEEILRQCDGLDGAEDGIIEDPDLCHPNATTLLCSPGATSGSCLTATQVNTVHEVYAPLLSSNSTLIYPRMQPGGEQFAAPAMYNGQPFQYSKDWWRYVVYSDPTWNATKWTIRDAEAALRQNPYNIQTWNADLSPLRDSGSKLLTYHGLQDQLISSDDSKLYYHRLMKTMGVTSNQLDEFYRFFQISGMAHCQDGDGAYGIGNRAETEFSTEPEDNVLMAMVRWVEEGIAPETVRGAKFSDGVGSEVEYYRKHCRYPRRNVYKGPGDYTDETAWECV.

An N-terminal signal peptide occupies residues 1–19; it reads MALLRHLLPVLTVGSAVQS. Cystine bridges form between Cys31-Cys76 and Cys65-Cys115. Asn56, Asn86, and Asn139 each carry an N-linked (GlcNAc...) asparagine glycan. 4 disulfide bridges follow: Cys188–Cys442, Cys257–Cys274, Cys283–Cys292, and Cys504–Cys526. The active-site Acyl-ester intermediate is Ser189. Ca(2+)-binding residues include Asp258, Asp261, Ala263, Asp265, and Ile267. Asn277 carries an N-linked (GlcNAc...) asparagine glycan. N-linked (GlcNAc...) asparagine glycosylation is found at Asn312 and Asn356. Active-site charge relay system residues include Asp401 and His441.

Belongs to the tannase family.

Its subcellular location is the secreted. It catalyses the reaction feruloyl-polysaccharide + H2O = ferulate + polysaccharide.. Its function is as follows. Involved in degradation of plant cell walls. Hydrolyzes the feruloyl-arabinose ester bond in arabinoxylans as well as the feruloyl-galactose and feruloyl-arabinose ester bonds in pectin. This Emericella nidulans (strain FGSC A4 / ATCC 38163 / CBS 112.46 / NRRL 194 / M139) (Aspergillus nidulans) protein is Probable feruloyl esterase B (faeB).